Consider the following 382-residue polypeptide: ATP phosphoribosyltransferase regulatory subunit (382 aa).

It belongs to the class-II aminoacyl-tRNA synthetase family. HisZ subfamily. Heteromultimer composed of HisG and HisZ subunits.

It is found in the cytoplasm. Its pathway is amino-acid biosynthesis; L-histidine biosynthesis; L-histidine from 5-phospho-alpha-D-ribose 1-diphosphate: step 1/9. Required for the first step of histidine biosynthesis. May allow the feedback regulation of ATP phosphoribosyltransferase activity by histidine. This chain is ATP phosphoribosyltransferase regulatory subunit, found in Burkholderia cenocepacia (strain HI2424).